Reading from the N-terminus, the 242-residue chain is Probable transcriptional regulatory protein HEAR0561 (242 aa).

The protein belongs to the TACO1 family.

It is found in the cytoplasm. The sequence is that of Probable transcriptional regulatory protein HEAR0561 from Herminiimonas arsenicoxydans.